The sequence spans 132 residues: Inactive D-aminoacyl-tRNA deacylase (132 aa).

It belongs to the DTD family.

In terms of biological role, a non-functional D-aminoacyl-tRNA deacylase. This chain is Inactive D-aminoacyl-tRNA deacylase, found in Bacillus subtilis (strain 168).